Consider the following 480-residue polypeptide: Adenosylhomocysteinase (480 aa).

3 residues coordinate substrate: Thr63, Asp142, and Glu203. 204-206 (TTT) provides a ligand contact to NAD(+). Substrate-binding residues include Lys233 and Asp237. Residues Asn238, 267 to 272 (GYGDVG), Glu290, Asn325, 346 to 348 (IGH), and Asn394 each bind NAD(+).

The protein belongs to the adenosylhomocysteinase family. NAD(+) serves as cofactor.

The protein resides in the cytoplasm. The catalysed reaction is S-adenosyl-L-homocysteine + H2O = L-homocysteine + adenosine. The protein operates within amino-acid biosynthesis; L-homocysteine biosynthesis; L-homocysteine from S-adenosyl-L-homocysteine: step 1/1. May play a key role in the regulation of the intracellular concentration of adenosylhomocysteine. This Xylella fastidiosa (strain M12) protein is Adenosylhomocysteinase.